The primary structure comprises 545 residues: CTP synthase (545 aa).

The amidoligase domain stretch occupies residues 1–266 (MATNYIFVTG…DTFVCDRFRL (266 aa)). S14 provides a ligand contact to CTP. S14 is a binding site for UTP. Residues 15–20 (SLGKGI) and D72 each bind ATP. D72 and E140 together coordinate Mg(2+). Residues 147 to 149 (DIE), 187 to 192 (KTKPTQ), and K223 contribute to the CTP site. Residues 187 to 192 (KTKPTQ) and K223 contribute to the UTP site. 239-241 (KDV) is an ATP binding site. The Glutamine amidotransferase type-1 domain maps to 291-542 (TIGMVGKYVE…VAAAKAYQDS (252 aa)). Residue G352 coordinates L-glutamine. C379 serves as the catalytic Nucleophile; for glutamine hydrolysis. Residues 380-383 (LGMQ), E403, and R470 each bind L-glutamine. Catalysis depends on residues H515 and E517.

The protein belongs to the CTP synthase family. As to quaternary structure, homotetramer.

The enzyme catalyses UTP + L-glutamine + ATP + H2O = CTP + L-glutamate + ADP + phosphate + 2 H(+). It catalyses the reaction L-glutamine + H2O = L-glutamate + NH4(+). The catalysed reaction is UTP + NH4(+) + ATP = CTP + ADP + phosphate + 2 H(+). It participates in pyrimidine metabolism; CTP biosynthesis via de novo pathway; CTP from UDP: step 2/2. Its activity is regulated as follows. Allosterically activated by GTP, when glutamine is the substrate; GTP has no effect on the reaction when ammonia is the substrate. The allosteric effector GTP functions by stabilizing the protein conformation that binds the tetrahedral intermediate(s) formed during glutamine hydrolysis. Inhibited by the product CTP, via allosteric rather than competitive inhibition. Catalyzes the ATP-dependent amination of UTP to CTP with either L-glutamine or ammonia as the source of nitrogen. Regulates intracellular CTP levels through interactions with the four ribonucleotide triphosphates. This Actinobacillus pleuropneumoniae serotype 5b (strain L20) protein is CTP synthase.